A 142-amino-acid polypeptide reads, in one-letter code: Ribosome-binding factor A (142 aa).

The interval T120–T142 is disordered. Positions E123–T142 are enriched in polar residues.

It belongs to the RbfA family. Monomer. Binds 30S ribosomal subunits, but not 50S ribosomal subunits or 70S ribosomes.

It is found in the cytoplasm. One of several proteins that assist in the late maturation steps of the functional core of the 30S ribosomal subunit. Associates with free 30S ribosomal subunits (but not with 30S subunits that are part of 70S ribosomes or polysomes). Required for efficient processing of 16S rRNA. May interact with the 5'-terminal helix region of 16S rRNA. This Prochlorococcus marinus (strain MIT 9313) protein is Ribosome-binding factor A.